A 557-amino-acid polypeptide reads, in one-letter code: Protein PECTIC ARABINOGALACTAN SYNTHESIS-RELATED (557 aa).

Positions 1-54 (MAELRHSSSLGSRSSSSPLRAAGDEDSSSPHVHDHSPNGGDDEDGRPRHPSRDR) are disordered. The Cytoplasmic segment spans residues 1–79 (MAELRHSSSL…DPRVSPQKNK (79 aa)). Positions 7–20 (SSSLGSRSSSSPLR) are enriched in low complexity. The segment covering 45-54 (GRPRHPSRDR) has biased composition (basic and acidic residues). The helical; Signal-anchor for type II membrane protein transmembrane segment at 80–100 (ISLLLILILAIASLISVYGII) threads the bilayer. Over 101 to 557 (NHLNAPYLCK…NPLTPCMCKA (457 aa)) the chain is Lumenal. N-linked (GlcNAc...) asparagine glycosylation is found at asparagine 156, asparagine 188, and asparagine 324. 336 to 338 (HLR) is a binding site for substrate. Residue asparagine 375 is glycosylated (N-linked (GlcNAc...) asparagine).

This sequence belongs to the glycosyltransferase GT106 family. In terms of tissue distribution, widely expressed with the highest expression in reproductive tissues and roots.

The protein resides in the golgi apparatus membrane. Its pathway is glycan metabolism; pectin biosynthesis. Glycosyltransferase involved in the biosynthesis of pectic type-II arabinogalactans. This chain is Protein PECTIC ARABINOGALACTAN SYNTHESIS-RELATED, found in Arabidopsis thaliana (Mouse-ear cress).